Reading from the N-terminus, the 466-residue chain is Cysteine--tRNA ligase (466 aa).

Residue Cys-28 participates in Zn(2+) binding. A 'HIGH' region motif is present at residues 30-40 (PTVYNYIHIGN). Zn(2+) is bound by residues Cys-208, His-233, and Glu-237. The 'KMSKS' region signature appears at 265–269 (KMSKS). Lys-268 contacts ATP.

It belongs to the class-I aminoacyl-tRNA synthetase family. In terms of assembly, monomer. The cofactor is Zn(2+).

The protein localises to the cytoplasm. The enzyme catalyses tRNA(Cys) + L-cysteine + ATP = L-cysteinyl-tRNA(Cys) + AMP + diphosphate. The protein is Cysteine--tRNA ligase of Staphylococcus aureus (strain bovine RF122 / ET3-1).